Here is a 402-residue protein sequence, read N- to C-terminus: MAPSEKDIEEVSVPGVLAPRDDVRVLKTRIAKLLGTSPDTFPGSQPVSFSKKHLQALKEKNYFVCEKSDGIRCLLYMTEHPRYENRPSVYLFDRKMNFYHVEKIFYPVENDKSGKKYHVDTLLDGELVLDIYPGGKKQLRYLVFDCLACDGIVYMSRLLDKRLGIFAKSIQKPLDEYTKTHMRETAIFPFLTSLKKMELGHGILKLFNEVIPRLRHGNDGLIFTCTETPYVSGTDQSLLKWKPKEMNTIDFMLKLEFAQPEEGDIDYSAMPEFQLGVWEGRNMYSFFAFMYVDEKEWEKLKSFNVPLSERIVECYLDDENRWRFLRFRDDKRDANHISTVKSVLQSIEDGVSKEDLLKEMPIIREAYYNRKKPSVTKRKLDETSNDDAPAIKKVAKESEKEI.

Lysine 67 (N6-GMP-lysine intermediate) is an active-site residue. The tract at residues 374–402 (SVTKRKLDETSNDDAPAIKKVAKESEKEI) is disordered.

This sequence belongs to the eukaryotic GTase family. In terms of assembly, heterodimer. The mRNA-capping enzyme is composed of two separate chains alpha and beta, respectively a mRNA guanylyltransferase and an mRNA 5'-triphosphate monophosphatase.

It is found in the nucleus. The enzyme catalyses a 5'-end diphospho-ribonucleoside in mRNA + GTP + H(+) = a 5'-end (5'-triphosphoguanosine)-ribonucleoside in mRNA + diphosphate. In terms of biological role, second step of mRNA capping. Transfer of the GMP moiety of GTP to the 5'-end of RNA via an enzyme-GMP covalent reaction intermediate. In Schizosaccharomyces pombe (strain 972 / ATCC 24843) (Fission yeast), this protein is mRNA-capping enzyme subunit alpha (ceg1).